The sequence spans 216 residues: Protein Syd (216 aa).

Belongs to the Syd family.

Its subcellular location is the cell inner membrane. Interacts with the SecY protein in vivo. May bind preferentially to an uncomplexed state of SecY, thus functioning either as a chelating agent for excess SecY in the cell or as a regulatory factor that negatively controls the translocase function. The protein is Protein Syd of Shewanella sp. (strain W3-18-1).